A 380-amino-acid polypeptide reads, in one-letter code: SAM and SH3 domain-containing protein 3 (380 aa).

A disordered region spans residues Met-1–Phe-174. The segment covering Leu-22–Val-41 has biased composition (low complexity). Phosphoserine occurs at positions 27, 34, and 42. Phosphothreonine is present on Thr-61. The span at Met-84 to Val-93 shows a compositional bias: basic residues. Ser-97 carries the phosphoserine modification. Thr-103 carries the phosphothreonine modification. Ser-110 is modified (phosphoserine). Phosphothreonine is present on Thr-112. Phosphoserine occurs at positions 113 and 120. Over residues Arg-143–Ser-158 the composition is skewed to polar residues. One can recognise an SH3 domain in the interval Pro-173–Glu-234. One can recognise an SAM domain in the interval Pro-252 to Tyr-316. A Phosphothreonine modification is found at Thr-318. Acidic residues predominate over residues Thr-318–Thr-327. The interval Thr-318–Pro-380 is disordered. Ser-320 carries the post-translational modification Phosphoserine.

This sequence belongs to the SASH family.

May function as a signaling adapter protein in lymphocytes. The sequence is that of SAM and SH3 domain-containing protein 3 from Bos taurus (Bovine).